Here is a 166-residue protein sequence, read N- to C-terminus: MAAYPESCVDTTVLDFVADLSLASPRRPLLCDFAPGVSLGDPALALREGRPRRMARFEEGDPEEEECEVDQGDGEEEEEEERGRGVSLLGRPKRKRVITYAQRQAANIRERKRMFNLNEAFDQLRRKVPTFAYEKRLSRIETLRLAIVYISFMTELLESCEKKESG.

The disordered stretch occupies residues 57–88 (FEEGDPEEEECEVDQGDGEEEEEEERGRGVSL). Over residues 60 to 80 (GDPEEEECEVDQGDGEEEEEE) the composition is skewed to acidic residues. The bHLH domain occupies 101-153 (AQRQAANIRERKRMFNLNEAFDQLRRKVPTFAYEKRLSRIETLRLAIVYISFM).

Heterodimer with TCF3/E12. Interacts with the bHLH domain of TCF3/E12.

The protein localises to the nucleus. Functionally, transcription factor that binds to the E-box and functions as inhibitor of transcription. DNA binding requires dimerization with an E protein. Inhibits transcription activation by ASCL1/MASH1 by sequestering E proteins. The sequence is that of Fer3-like protein (FERD3L) from Homo sapiens (Human).